A 392-amino-acid chain; its full sequence is Alkaline phosphatase L (392 aa).

An N-terminal signal peptide occupies residues 1 to 23; that stretch reads MYKRSLIAASLSVAALVSAQAMA.

It belongs to the PstS family. As to quaternary structure, homodimer.

Its subcellular location is the secreted. It localises to the periplasm. The enzyme catalyses a phosphate monoester + H2O = an alcohol + phosphate. Its function is as follows. Has both a phosphomonoesterase and phosphodiesterase activity. In Pseudomonas aeruginosa, this protein is Alkaline phosphatase L.